The following is a 306-amino-acid chain: Triplex capsid protein 2 (306 aa).

Belongs to the herpesviridae TRX2 protein family. Interacts with TRX1 and major capisd protein/MCP.

The protein localises to the virion. It is found in the host nucleus. Structural component of the T=16 icosahedral capsid. The capsid is composed of pentamers and hexamers of major capsid protein/MCP, which are linked together by heterotrimers called triplexes. These triplexes are formed by a single molecule of triplex protein 1/TRX1 and two copies of triplex protein 2/TRX2. Additionally, TRX1 is required for efficient transport of TRX2 to the nucleus, which is the site of capsid assembly. This is Triplex capsid protein 2 from Human cytomegalovirus (strain AD169) (HHV-5).